The chain runs to 53 residues: Small polypeptide DEVIL 7 (53 aa).

Residues 1 to 16 (MREKYTKEEAVKNWEK) are compositionally biased toward basic and acidic residues. The tract at residues 1–28 (MREKYTKEEAVKNWEKKKNKPSSPKGVG) is disordered. The required for DVL/RTFL small polypeptide activity stretch occupies residues 22 to 53 (SSPKGVGEFLKKKKGRFYIIGKCITMLLCSHK). A helical membrane pass occupies residues 30–46 (FLKKKKGRFYIIGKCIT).

Belongs to the DVL/RTFL small polypeptides family.

The protein resides in the cell membrane. In terms of biological role, small polypeptide acting as a regulatory molecule which coordinates cellular responses required for differentiation, growth and development, probably by restricting polar cell proliferation in lateral organs and coordinating socket cell recruitment and differentiation at trichome sites. The chain is Small polypeptide DEVIL 7 from Arabidopsis thaliana (Mouse-ear cress).